A 326-amino-acid chain; its full sequence is Vitamin B12 import system permease protein BtuC (326 aa).

The next 9 helical transmembrane spans lie at 15-35 (WLLC…CAGE), 61-81 (LAVL…QALF), 88-108 (PGLL…VLLG), 112-132 (LPNW…TLIL), 146-166 (LLAG…AIYF), 184-204 (GGVD…LLWI), 240-260 (GWMV…GLVI), 274-294 (VLLP…DVVA), and 302-322 (ELPI…WLLL).

This sequence belongs to the binding-protein-dependent transport system permease family. FecCD subfamily. The complex is composed of two ATP-binding proteins (BtuD), two transmembrane proteins (BtuC) and a solute-binding protein (BtuF).

Its subcellular location is the cell inner membrane. Part of the ABC transporter complex BtuCDF involved in vitamin B12 import. Involved in the translocation of the substrate across the membrane. The protein is Vitamin B12 import system permease protein BtuC of Escherichia coli O17:K52:H18 (strain UMN026 / ExPEC).